Consider the following 292-residue polypeptide: Nanos homolog 1 (292 aa).

Disordered regions lie at residues 1-41 and 68-121; these read MEAF…QPFS and GGNG…SRGR. The tract at residues 40 to 56 is essential for its translational repressor activity; it reads FSSWNDYLGLATLITKA. The span at 76–87 shows a compositional bias: low complexity; sequence PPSSSSSSCCSP. Residues 104-115 show a composition bias toward acidic residues; it reads DYDEDDDDDSDE. A Nanos-type zinc finger spans residues 213–267; the sequence is VCVFCRNNKEAMALYTTHILKGPDGRVLCPVLRRYTCPLCGASGDNAHTIKYCPL. Zn(2+) contacts are provided by Cys214, Cys217, His230, Cys241, Cys249, Cys252, His260, and Cys265. 2 short sequence motifs (C2HC) span residues 214 to 241 and 249 to 265; these read CVFC…RVLC and CPLC…IKYC. The segment at 268–292 is disordered; it reads SKVPPPPARPPPRSARDGPPGKKLR. The segment covering 269-280 has biased composition (pro residues); sequence KVPPPPARPPPR. The span at 281-292 shows a compositional bias: basic and acidic residues; it reads SARDGPPGKKLR.

Belongs to the nanos family. Interacts with PUM2, SNAPIN and CTNNB1. Interacts (via N-terminal region) with CTNND1. Interacts with DDX20 (via N-terminal region). In terms of tissue distribution, testis and ovary (at protein level). Predominantly expressed in testis. Specifically expressed during germline development. In adult tissues, it is mainly expressed in spermatogonia, the stem cells of the germline. Also expressed during meiosis in spermatocytes. Not present in late, post-meiotic stage germ cells. Expressed in fetal ovaries, while it is weakly or not expressed in mature postmeiotic oocytes, suggesting that it may be expressed in premeiotic female germ cells. Expressed at high levels only in the E-cadherin deficient cell lines. Highly expressed in lung carcinomas and mostly detected in invasive tumor cells and its expression correlates with tumor aggressiveness.

Its subcellular location is the cytoplasm. It localises to the perinuclear region. In terms of biological role, may act as a translational repressor which regulates translation of specific mRNAs by forming a complex with PUM2 that associates with the 3'-UTR of mRNA targets. Capable of interfering with the proadhesive and anti-invasive functions of E-cadherin. Up-regulates the production of MMP14 to promote tumor cell invasion. The sequence is that of Nanos homolog 1 (NANOS1) from Homo sapiens (Human).